The following is a 904-amino-acid chain: Nitrate reductase [NADH] 1 (904 aa).

Polar residues-rich tracts occupy residues 1-10 (MAASVENRQF) and 39-50 (STNFQKKPNSTI). The disordered stretch occupies residues 1-65 (MAASVENRQF…SSEDDDDDDE (65 aa)). Acidic residues predominate over residues 56–65 (SSEDDDDDDE). Residue Cys183 coordinates Mo-molybdopterin. Residues 531-606 (SKMYSMSEVR…LEEFRIGELL (76 aa)) form the Cytochrome b5 heme-binding domain. Positions 566 and 589 each coordinate heme. In terms of domain architecture, FAD-binding FR-type spans 647–759 (REKIPCKLID…KGPLGHIEYQ (113 aa)). Residues 699–702 (RAYT), 716–720 (VVKIY), Phe721, Phe728, 733–735 (QMS), and Thr786 each bind FAD.

It belongs to the nitrate reductase family. Homodimer. FAD is required as a cofactor. The cofactor is heme. Requires Mo-molybdopterin as cofactor.

The catalysed reaction is nitrite + NAD(+) + H2O = nitrate + NADH + H(+). Regulated by the nitrogen source and controlled by the circadian rhythm. In terms of biological role, nitrate reductase is a key enzyme involved in the first step of nitrate assimilation in plants, fungi and bacteria. This is Nitrate reductase [NADH] 1 (NIA1) from Nicotiana tabacum (Common tobacco).